Reading from the N-terminus, the 182-residue chain is ATP-dependent protease subunit HslV (182 aa).

Thr-10 is a catalytic residue. Residues Ala-166, Cys-169, and Ser-172 each contribute to the Na(+) site.

The protein belongs to the peptidase T1B family. HslV subfamily. In terms of assembly, a double ring-shaped homohexamer of HslV is capped on each side by a ring-shaped HslU homohexamer. The assembly of the HslU/HslV complex is dependent on binding of ATP.

The protein resides in the cytoplasm. The enzyme catalyses ATP-dependent cleavage of peptide bonds with broad specificity.. Its activity is regulated as follows. Allosterically activated by HslU binding. Protease subunit of a proteasome-like degradation complex believed to be a general protein degrading machinery. In Rickettsia peacockii (strain Rustic), this protein is ATP-dependent protease subunit HslV.